Reading from the N-terminus, the 96-residue chain is Co-chaperonin GroES (96 aa).

The protein belongs to the GroES chaperonin family. As to quaternary structure, heptamer of 7 subunits arranged in a ring. Interacts with the chaperonin GroEL.

Its subcellular location is the cytoplasm. Functionally, together with the chaperonin GroEL, plays an essential role in assisting protein folding. The GroEL-GroES system forms a nano-cage that allows encapsulation of the non-native substrate proteins and provides a physical environment optimized to promote and accelerate protein folding. GroES binds to the apical surface of the GroEL ring, thereby capping the opening of the GroEL channel. This is Co-chaperonin GroES from Shewanella sediminis (strain HAW-EB3).